The following is a 115-amino-acid chain: Insulin (115 aa).

The N-terminal stretch at 1–22 (MAALWLQSVSLLVLMLVSWSGS) is a signal peptide. 3 disulfide bridges follow: C32/C101, C44/C114, and C100/C105. A propeptide spans 56 to 92 (DVDPLLGFLPAKSGGAAAGGENEVAEFAFKDQMEMMV) (c peptide).

Belongs to the insulin family. Heterodimer of a B chain and an A chain linked by two disulfide bonds.

It is found in the secreted. Insulin decreases blood glucose concentration. It increases cell permeability to monosaccharides, amino acids and fatty acids. It accelerates glycolysis, the pentose phosphate cycle, and glycogen synthesis in liver. The chain is Insulin (ins) from Verasper moseri (Barfin flounder).